We begin with the raw amino-acid sequence, 1043 residues long: RNA cytidine acetyltransferase (1043 aa).

ATP contacts are provided by residues 285-294 (GRGKSAAVGL) and Arg462. Positions 551 to 736 (VLMAPIDKSR…VPVYIRQNSN (186 aa)) constitute an N-acetyltransferase domain. Acetyl-CoA-binding positions include 622–624 (VAV), 629–635 (QSMGYGG), and Arg723. The interval 1020-1043 (IPDAKDPANKNAKKKKRFSSGGRR) is disordered. The segment covering 1030–1043 (NAKKKKRFSSGGRR) has biased composition (basic residues).

The protein belongs to the RNA cytidine acetyltransferase family. NAT10 subfamily. Part of the small subunit (SSU) processome, composed of more than 70 proteins and the RNA chaperone small nucleolar RNA (snoRNA) U3.

It is found in the nucleus. Its subcellular location is the nucleolus. It catalyses the reaction a cytidine in 18S rRNA + acetyl-CoA + ATP + H2O = an N(4)-acetylcytidine in 18S rRNA + ADP + phosphate + CoA + H(+). The enzyme catalyses a cytidine in tRNA + acetyl-CoA + ATP + H2O = an N(4)-acetylcytidine in tRNA + ADP + phosphate + CoA + H(+). Functionally, RNA cytidine acetyltransferase with specificity toward both 18S rRNA and tRNAs. Catalyzes the formation of N(4)-acetylcytidine (ac4C) in 18S rRNA. Required for early nucleolar cleavages of precursor rRNA at sites A0, A1 and A2 during 18S rRNA synthesis. Catalyzes the formation of ac4C in serine and leucine tRNAs. Requires a tRNA-binding adapter protein for full tRNA acetyltransferase activity but not for 18S rRNA acetylation. Part of the small subunit (SSU) processome, first precursor of the small eukaryotic ribosomal subunit. During the assembly of the SSU processome in the nucleolus, many ribosome biogenesis factors, an RNA chaperone and ribosomal proteins associate with the nascent pre-rRNA and work in concert to generate RNA folding, modifications, rearrangements and cleavage as well as targeted degradation of pre-ribosomal RNA by the RNA exosome. The chain is RNA cytidine acetyltransferase from Caenorhabditis elegans.